The chain runs to 215 residues: dITP/XTP pyrophosphatase (215 aa).

13 to 18 (THNTGK) provides a ligand contact to substrate. The active-site Proton acceptor is the D74. A Mg(2+)-binding site is contributed by D74. Substrate contacts are provided by residues S75, 163–166 (FGFD), K186, and 199–200 (HR).

This sequence belongs to the HAM1 NTPase family. Homodimer. Requires Mg(2+) as cofactor.

It carries out the reaction XTP + H2O = XMP + diphosphate + H(+). The catalysed reaction is dITP + H2O = dIMP + diphosphate + H(+). The enzyme catalyses ITP + H2O = IMP + diphosphate + H(+). Functionally, pyrophosphatase that catalyzes the hydrolysis of nucleoside triphosphates to their monophosphate derivatives, with a high preference for the non-canonical purine nucleotides XTP (xanthosine triphosphate), dITP (deoxyinosine triphosphate) and ITP. Seems to function as a house-cleaning enzyme that removes non-canonical purine nucleotides from the nucleotide pool, thus preventing their incorporation into DNA/RNA and avoiding chromosomal lesions. The polypeptide is dITP/XTP pyrophosphatase (Bartonella quintana (strain Toulouse) (Rochalimaea quintana)).